Here is a 322-residue protein sequence, read N- to C-terminus: Ribosomal RNA small subunit methyltransferase H (322 aa).

Residues glycine 35–tyrosine 37, aspartate 52, phenylalanine 79, aspartate 100, and glutamine 107 each bind S-adenosyl-L-methionine. The disordered stretch occupies residues glycine 254–glycine 322. The span at serine 295–alanine 309 shows a compositional bias: low complexity.

This sequence belongs to the methyltransferase superfamily. RsmH family.

It is found in the cytoplasm. The catalysed reaction is cytidine(1402) in 16S rRNA + S-adenosyl-L-methionine = N(4)-methylcytidine(1402) in 16S rRNA + S-adenosyl-L-homocysteine + H(+). In terms of biological role, specifically methylates the N4 position of cytidine in position 1402 (C1402) of 16S rRNA. This is Ribosomal RNA small subunit methyltransferase H from Rhizorhabdus wittichii (strain DSM 6014 / CCUG 31198 / JCM 15750 / NBRC 105917 / EY 4224 / RW1) (Sphingomonas wittichii).